Here is a 434-residue protein sequence, read N- to C-terminus: N-acylneuraminate cytidylyltransferase (434 aa).

Met-1 is modified (N-acetylmethionine). The tract at residues 1-42 (MDSVEKGAATSVSNPRGRPSRGRPPKLQRNSRGGQGRGVEKP) is disordered. The BC1 motif motif lies at 15–31 (PRGRPSRGRPPKLQRNS). Omega-N-methylarginine is present on residues Arg-37 and Arg-52. Residues Arg-52, Asn-62, Arg-111, Ser-120, Ser-122, and Gln-143 each contribute to the substrate site. The BC2 motif motif lies at 200–206 (KRPRRQD). The active site involves Arg-201. Residues 269–276 (KEKLKEIK) carry the BC3 motif motif.

The protein belongs to the CMP-NeuNAc synthase family. In terms of assembly, homotetramer; the active enzyme is formed by a dimer of dimers.

It localises to the nucleus. The catalysed reaction is an N-acylneuraminate + CTP = a CMP-N-acyl-beta-neuraminate + diphosphate. It functions in the pathway amino-sugar metabolism; N-acetylneuraminate metabolism. Catalyzes the activation of N-acetylneuraminic acid (NeuNAc) to cytidine 5'-monophosphate N-acetylneuraminic acid (CMP-NeuNAc), a substrate required for the addition of sialic acid. Has some activity toward NeuNAc, N-glycolylneuraminic acid (Neu5Gc) or 2-keto-3-deoxy-D-glycero-D-galacto-nononic acid (KDN). This chain is N-acylneuraminate cytidylyltransferase (CMAS), found in Bos taurus (Bovine).